The primary structure comprises 458 residues: Delta(8)-fatty-acid desaturase (458 aa).

The 85-residue stretch at 16–100 (KKYITSKELK…LKDYQVSDIS (85 aa)) folds into the Cytochrome b5 heme-binding domain. Heme is bound by residues histidine 51 and histidine 74. 2 helical membrane passes run 122–142 (GVIY…YGVL) and 147–167 (FWIH…IAYL). A Histidine box-1 motif is present at residues 169-173 (HDAGH). A helical membrane pass occupies residues 185–205 (FAGIFIGNCITGISIAWWKWT). The Histidine box-2 motif lies at 206–210 (HNAHH). Transmembrane regions (helical) follow at residues 264 to 284 (YYPI…LLLI), 293 to 313 (GLNI…VSRL), and 320 to 340 (VAFV…FTLN). A Histidine box-3 motif is present at residues 383 to 387 (QLEHH).

The protein belongs to the fatty acid desaturase type 1 family. Fe cation serves as cofactor.

Its subcellular location is the membrane. It catalyses the reaction an N-acyl-(4R)-4-hydroxysphinganine + 2 Fe(II)-[cytochrome b5] + O2 + 2 H(+) = a (4R,8E)-4-hydroxysphingenine ceramide + 2 Fe(III)-[cytochrome b5] + 2 H2O. It carries out the reaction an N-acyl-(4R)-4-hydroxysphinganine + 2 Fe(II)-[cytochrome b5] + O2 + 2 H(+) = a (4R,8Z)-4-hydroxysphing-8-enine ceramide + 2 Fe(III)-[cytochrome b5] + 2 H2O. Its function is as follows. Plays a major role as delta(8)-fatty-acid desaturase which introduces a double bond at the 8-position in the long-chain base (LCB) of ceramides with or without a hydroxy group at the 4-position. The enzyme produces both the 8E and 8Z isomers. This structural modification contributes to the quantitative partitioning of ceramides between the two major sphingolipid classes, glucosylceramides and glycosylinositolphosphoryl ceramides. Sphingolipids are important membrane components involved in environmental stress responses, such as resistance to chilling, and act as cell signaling molecules. The protein is Delta(8)-fatty-acid desaturase (sld1) of Helianthus annuus (Common sunflower).